The chain runs to 68 residues: Kasstasin (68 aa).

A signal peptide spans 1–20; the sequence is MMKKSMLLLFFLGMVSFSLA. The propeptide occupies 21 to 44; the sequence is DDKREDEGEEKRADEGEEKRAAEE. Residues 22-41 are disordered; it reads DKREDEGEEKRADEGEEKRA. Lysine 67 bears the Lysine amide mark.

It belongs to the frog skin active peptide (FSAP) family. Brevinin subfamily. As to expression, expressed by the skin dorsal glands.

It is found in the secreted. In terms of biological role, peptide with potent vasoconstrictor properties (EC50=25 pM). Has moderate antimicrobial activity against Gram-positive bacterium S.aureus (MIC=55 uM) and against Gram-negative bacterium E.coli (MIC=110 uM). Not active against fungus C.albicans. Has weak hemolytic activity against horse erythrocytes. This chain is Kasstasin, found in Phlyctimantis maculatus (Red-legged running frog).